The primary structure comprises 461 residues: Dihydrolipoyl dehydrogenase (461 aa).

FAD is bound by residues 33–41 (EAAEVGGVC), lysine 50, and alanine 112. The cysteines at positions 41 and 46 are disulfide-linked. NAD(+) is bound by residues 173 to 177 (GGGAV), glutamate 196, and 263 to 266 (AVGR). 2 residues coordinate FAD: aspartate 306 and alanine 314. The active-site Proton acceptor is histidine 437.

It belongs to the class-I pyridine nucleotide-disulfide oxidoreductase family. Homodimer. FAD serves as cofactor.

Its subcellular location is the membrane. The catalysed reaction is N(6)-[(R)-dihydrolipoyl]-L-lysyl-[protein] + NAD(+) = N(6)-[(R)-lipoyl]-L-lysyl-[protein] + NADH + H(+). Functionally, has chromate reductase activity. This is Dihydrolipoyl dehydrogenase from Thermus scotoductus (strain ATCC 700910 / SA-01).